The sequence spans 796 residues: Protein translocase subunit SecA 2 (796 aa).

ATP-binding positions include glutamine 84, glycine 102–threonine 106, and aspartate 496.

The protein belongs to the SecA family. As to quaternary structure, monomer and homodimer. Part of the essential Sec protein translocation apparatus which comprises SecA, SecYEG and auxiliary proteins SecDF. Other proteins may also be involved.

It is found in the cell membrane. The protein localises to the cytoplasm. The catalysed reaction is ATP + H2O + cellular proteinSide 1 = ADP + phosphate + cellular proteinSide 2.. Its function is as follows. Part of the Sec protein translocase complex. Interacts with the SecYEG preprotein conducting channel. Has a central role in coupling the hydrolysis of ATP to the transfer of proteins into and across the cell membrane, serving as an ATP-driven molecular motor driving the stepwise translocation of polypeptide chains across the membrane. The chain is Protein translocase subunit SecA 2 from Staphylococcus aureus (strain Mu3 / ATCC 700698).